The sequence spans 507 residues: Phosphoprotein (507 aa).

Positions 1–48 are interaction with N0; the sequence is MAEEQARHVKNGLECIRALKAEPIGSLAIEEAMAAWSEISDNPGQERA. Disordered regions lie at residues 40–100, 134–163, 201–232, 250–273, and 285–309; these read SDNP…PRNL, GLDG…TEGY, NNFP…KKGT, GATQ…GNVP, and WTPE…HYDD. S86 carries the post-translational modification Phosphoserine. A compositionally biased stretch (low complexity) spans 134-145; sequence GLDGDSTLSGGD. Over residues 146–160 the composition is skewed to acidic residues; sequence NESENSDVDIGEPDT. The residue at position 151 (S151) is a Phosphoserine. Residues 260–270 are compositionally biased toward low complexity; the sequence is SEPSGPGAPAG. Over residues 286 to 301 the composition is skewed to polar residues; sequence TPESGTTISPRSQNNE. The segment at 304–376 is multimerization; the sequence is GDHYDDELFS…LSSIMIAIPG (73 aa). Position 314 (D314) interacts with Ca(2+). Interaction with the L polymerase stretches follow at residues 361-377 and 396-410; these read STLE…IPGL and PIIG…AEVL. A x domain (XD) region spans residues 457-507; it reads GPASRSVIRSIIKSSRLEEDRKRYLMTLLDDIKGANDLAKFHQMLMKIIMK. Residues 459-507 are interaction with the nucleocapsid (N-RNA); it reads ASRSVIRSIIKSSRLEEDRKRYLMTLLDDIKGANDLAKFHQMLMKIIMK.

The protein belongs to the morbillivirus P protein family. Homotetramer. Interacts (via multimerization domain and XD domain) with polymerase L; this interaction forms the polymerase L-P complex. Interacts (via N-terminus) with N0 (via Ncore); this interaction allows P to chaperon N0 to avoid N polymerization and non-specific RNA binding before encapsidation. Interacts (via C-terminus) with N-RNA template (via Ntail); this interaction maintains the P/L complex anchored to the nucleocapsid template during the sequential transcription. Interacts (via C-terminus) with protein C this interaction allows C to associate with the ribonucleocapsid. Phosphorylation on serines by host CK2 is necessary for the formation of viral factories.

Functionally, essential cofactor of the RNA polymerase L that plays a central role in the transcription and replication by forming the polymerase complex with RNA polymerase L and recruiting L to the genomic N-RNA template for RNA synthesis. Also plays a central role in the encapsidation of nascent RNA chains by forming the encapsidation complex with the nucleocapsid protein N (N-P complex). Acts as a chaperone for newly synthesized free N protein, so-called N0, allowing encapsidation of nascent RNA chains during replication. The nucleoprotein protein N prevents excessive phosphorylation of P, which leads to down-regulation of viral transcription/ replication. Participates, together with N, in the formation of viral factories (viroplasms), which are large inclusions in the host cytoplasm where replication takes place. In Measles virus (strain Edmonston B) (MeV), this protein is Phosphoprotein (P/V).